The primary structure comprises 239 residues: Purine nucleoside phosphorylase DeoD-type (239 aa).

H5 provides a ligand contact to a purine D-ribonucleoside. Residues G21, R25, R44, and 88-91 each bind phosphate; that span reads RVGS. A purine D-ribonucleoside-binding positions include 180–182 and 204–205; these read EME and SD. The active-site Proton donor is the D205.

Belongs to the PNP/UDP phosphorylase family. As to quaternary structure, homohexamer; trimer of homodimers.

The catalysed reaction is a purine D-ribonucleoside + phosphate = a purine nucleobase + alpha-D-ribose 1-phosphate. It carries out the reaction a purine 2'-deoxy-D-ribonucleoside + phosphate = a purine nucleobase + 2-deoxy-alpha-D-ribose 1-phosphate. Its function is as follows. Catalyzes the reversible phosphorolytic breakdown of the N-glycosidic bond in the beta-(deoxy)ribonucleoside molecules, with the formation of the corresponding free purine bases and pentose-1-phosphate. This is Purine nucleoside phosphorylase DeoD-type from Citrobacter koseri (strain ATCC BAA-895 / CDC 4225-83 / SGSC4696).